Here is a 519-residue protein sequence, read N- to C-terminus: Probable cytosol aminopeptidase (519 aa).

Mn(2+) is bound by residues Lys251 and Asp256. Lys263 is an active-site residue. Mn(2+) is bound by residues Asp274, Asp333, and Glu335. Arg337 is a catalytic residue. Residues 487–502 (VAPAAPAAPAAPAARP) show a composition bias toward low complexity. The disordered stretch occupies residues 487–519 (VAPAAPAAPAAPAARPAAKRTGRSQGGLKRTAP).

This sequence belongs to the peptidase M17 family. Requires Mn(2+) as cofactor.

Its subcellular location is the cytoplasm. The catalysed reaction is Release of an N-terminal amino acid, Xaa-|-Yaa-, in which Xaa is preferably Leu, but may be other amino acids including Pro although not Arg or Lys, and Yaa may be Pro. Amino acid amides and methyl esters are also readily hydrolyzed, but rates on arylamides are exceedingly low.. It carries out the reaction Release of an N-terminal amino acid, preferentially leucine, but not glutamic or aspartic acids.. Its function is as follows. Presumably involved in the processing and regular turnover of intracellular proteins. Catalyzes the removal of unsubstituted N-terminal amino acids from various peptides. The sequence is that of Probable cytosol aminopeptidase from Verminephrobacter eiseniae (strain EF01-2).